We begin with the raw amino-acid sequence, 209 residues long: uncharacterized protein (209 aa).

A signal peptide spans M1–A17. The disordered stretch occupies residues A17–S106. A lipid anchor (N-palmitoyl cysteine) is attached at C18. C18 carries S-diacylglycerol cysteine lipidation. The span at D23 to S70 shows a compositional bias: basic and acidic residues. A compositionally biased stretch (low complexity) spans A71–S106.

The protein localises to the cell membrane. This is an uncharacterized protein from Staphylococcus aureus (strain MRSA252).